The primary structure comprises 235 residues: Calcium-activated potassium channel subunit beta-2 (235 aa).

The segment at 1–45 (MFIWTSGRTSSSYRHDEKRNIYQKIRDHDLLDKRKTVTALKAGED) is ball and chain. Residues 1–46 (MFIWTSGRTSSSYRHDEKRNIYQKIRDHDLLDKRKTVTALKAGEDR) lie on the Cytoplasmic side of the membrane. Residues 47–67 (AILLGLAMMVCSIMMYFLLGI) traverse the membrane as a helical segment. The Extracellular segment spans residues 68–194 (TLLRSYMQSV…VILTKLYSSN (127 aa)). Residues Asn88, Asn96, and Asn119 are each glycosylated (N-linked (GlcNAc...) asparagine). A helical membrane pass occupies residues 195–215 (VLFHSLFWPTCMMAGGVAIVA). Residues 216–235 (MVKLTQYLSLLCERIQRINR) are Cytoplasmic-facing.

The protein belongs to the KCNMB (TC 8.A.14.1) family. KCNMB2 subfamily. As to quaternary structure, interacts with KCNMA1 tetramer. There are probably 4 molecules of KCMNB2 per KCNMA1 tetramer. Post-translationally, N-glycosylated. As to expression, highly expressed in brain and heart. Also expressed in lung.

Its subcellular location is the membrane. In terms of biological role, regulatory subunit of the calcium activated potassium KCNMA1 (maxiK) channel. Modulates the calcium sensitivity and gating kinetics of KCNMA1, thereby contributing to KCNMA1 channel diversity. Acts as a negative regulator that confers rapid and complete inactivation of KCNMA1 channel complex. This chain is Calcium-activated potassium channel subunit beta-2 (Kcnmb2), found in Rattus norvegicus (Rat).